Here is a 257-residue protein sequence, read N- to C-terminus: UPF0246 protein KPK_4750 (257 aa).

The protein belongs to the UPF0246 family.

This chain is UPF0246 protein KPK_4750, found in Klebsiella pneumoniae (strain 342).